We begin with the raw amino-acid sequence, 121 residues long: MSITKDQIIEAVSAMSVMDVVELISAMEEKFGVSAAAAVAVAAGPVEAAEEKTEFDVILKAAGANKVAVIKAVRGATGLGLKEAKDLVESAPAALKEGISKDDAEALKKSLEEAGAEVEVK.

Belongs to the bacterial ribosomal protein bL12 family. As to quaternary structure, homodimer. Part of the ribosomal stalk of the 50S ribosomal subunit. Forms a multimeric L10(L12)X complex, where L10 forms an elongated spine to which 2 to 4 L12 dimers bind in a sequential fashion. Binds GTP-bound translation factors.

Forms part of the ribosomal stalk which helps the ribosome interact with GTP-bound translation factors. Is thus essential for accurate translation. The protein is Large ribosomal subunit protein bL12 of Klebsiella pneumoniae (strain 342).